Consider the following 572-residue polypeptide: Myb-like protein Y (572 aa).

The segment covering 196–211 (QSQSQLPTATNNNNKQ) has biased composition (polar residues). The segment at 196–283 (QSQSQLPTAT…NNNNNNNNNE (88 aa)) is disordered. Composition is skewed to low complexity over residues 222-237 (TATATATTTATTTTTT) and 260-281 (NDNNNNTNNNNNNNNNNNNNNN). In terms of domain architecture, Myb-like spans 311-360 (PWTVEDQKKLEDALTKYPPSRFSSVSRWQMVSKELGISPKAVALRYNQML). A disordered region spans residues 367-456 (KPSLQQQQQQ…TTVTPNMTTP (90 aa)). Composition is skewed to low complexity over residues 371–392 (QQQQQQQQQQQQQPTTTTTTTT) and 414–425 (SSFSSPSSSSKE). Over residues 426–435 (SPNKKEKTTH) the composition is skewed to basic and acidic residues. Residues 436–455 (DTTTTTNTATTTTVTPNMTT) show a composition bias toward low complexity.

In Dictyostelium discoideum (Social amoeba), this protein is Myb-like protein Y (mybY).